Here is a 185-residue protein sequence, read N- to C-terminus: Ribosome-recycling factor (185 aa).

It belongs to the RRF family.

It localises to the cytoplasm. Functionally, responsible for the release of ribosomes from messenger RNA at the termination of protein biosynthesis. May increase the efficiency of translation by recycling ribosomes from one round of translation to another. The chain is Ribosome-recycling factor from Myxococcus xanthus (strain DK1622).